The chain runs to 243 residues: 3-deoxy-manno-octulosonate cytidylyltransferase (243 aa).

This sequence belongs to the KdsB family.

The protein resides in the cytoplasm. It catalyses the reaction 3-deoxy-alpha-D-manno-oct-2-ulosonate + CTP = CMP-3-deoxy-beta-D-manno-octulosonate + diphosphate. The protein operates within nucleotide-sugar biosynthesis; CMP-3-deoxy-D-manno-octulosonate biosynthesis; CMP-3-deoxy-D-manno-octulosonate from 3-deoxy-D-manno-octulosonate and CTP: step 1/1. It functions in the pathway bacterial outer membrane biogenesis; lipopolysaccharide biosynthesis. Functionally, activates KDO (a required 8-carbon sugar) for incorporation into bacterial lipopolysaccharide in Gram-negative bacteria. The chain is 3-deoxy-manno-octulosonate cytidylyltransferase from Helicobacter pylori (strain P12).